The primary structure comprises 222 residues: Cyclin-U2-1 (222 aa).

It belongs to the cyclin family. Cyclin U/P subfamily. Interacts with CDKA-1. Expressed in roots, stems and flowers. Expressed in the shoot apex, leaf primordia and young leaves.

The chain is Cyclin-U2-1 (CYCU2-1) from Arabidopsis thaliana (Mouse-ear cress).